The following is a 415-amino-acid chain: MDVSTQTRHATYFQDENQLQKDHIYVKKKSHIKLNTGVRAPFKAVDNINQQDEPTLIEGNNESSISSSTGDTFEEDFAYQDKVEIEERSIRSTPKSIGDDDLENREGSFDAPEGILTHGKHRLPTIPEWTKEDLAALSEAAARLQANPSPEDIETDPSMVPDYDPEIFHYMQSLERKLAPPPNYMSVQQEIDWVTRHMLVDWIVQVQIHFRLLPETLFLAVNLIDRFLSIKVVSLQKVQLVGLSALLIACKYEEIHPPSIYNFAHVVQGIFTVDEIIRAERYMLMLLDFDISWPGPMSFLRRISRADSYDHDIRMLAKYLQEVTLMDEIFIGAHISFIAATAYYLSMQMLGHLDWTPCHVYYSGYTARQLKPCAIIIMECLVDAPNHHNAIYRKYSENRMKRVSAFAHNWVLSVI.

2 disordered regions span residues 54-74 and 86-118; these read PTLI…DTFE and EERS…ILTH. Low complexity predominate over residues 57 to 71; it reads IEGNNESSISSSTGD. S96 bears the Phosphoserine mark.

The protein belongs to the cyclin family. Cyclin G subfamily.

Required for efficient passage of the G1/S transition. The sequence is that of G2/mitotic-specific cyclin cig1 (cig1) from Schizosaccharomyces pombe (strain 972 / ATCC 24843) (Fission yeast).